A 1059-amino-acid polypeptide reads, in one-letter code: Carbamoyl phosphate synthase large chain (1059 aa).

A carboxyphosphate synthetic domain region spans residues 1–401 (MPKRKDIQKV…AMLKAVRSLE (401 aa)). Arg-129, Arg-169, Gly-175, Gly-176, Arg-208, Ile-210, Glu-215, Gly-241, Val-242, His-243, Gln-284, and Glu-298 together coordinate ATP. The ATP-grasp 1 domain maps to 133–327 (KALMERLNEP…IAKMAAKIAV (195 aa)). 3 residues coordinate Mg(2+): Gln-284, Glu-298, and Asn-300. Mn(2+) is bound by residues Gln-284, Glu-298, and Asn-300. The oligomerization domain stretch occupies residues 402 to 546 (IGVTGLNDLT…YATYERENES (145 aa)). Residues 547 to 929 (VRSKKPSVIV…ALYKAFVASN (383 aa)) are carbamoyl phosphate synthetic domain. Residues 671 to 861 (DQVIKTLALP…LAQLATRVML (191 aa)) form the ATP-grasp 2 domain. ATP contacts are provided by Arg-707, Ser-746, Leu-748, Glu-752, Gly-777, Val-778, His-779, Ser-780, Gln-820, and Glu-832. Mg(2+)-binding residues include Gln-820, Glu-832, and Asn-834. Residues Gln-820, Glu-832, and Asn-834 each coordinate Mn(2+). One can recognise an MGS-like domain in the interval 930–1059 (IKVPQYGNVL…SRSFTVNEMK (130 aa)). Residues 930-1059 (IKVPQYGNVL…SRSFTVNEMK (130 aa)) form an allosteric domain region.

This sequence belongs to the CarB family. As to quaternary structure, composed of two chains; the small (or glutamine) chain promotes the hydrolysis of glutamine to ammonia, which is used by the large (or ammonia) chain to synthesize carbamoyl phosphate. Tetramer of heterodimers (alpha,beta)4. The cofactor is Mg(2+). Mn(2+) is required as a cofactor.

It catalyses the reaction hydrogencarbonate + L-glutamine + 2 ATP + H2O = carbamoyl phosphate + L-glutamate + 2 ADP + phosphate + 2 H(+). It carries out the reaction hydrogencarbonate + NH4(+) + 2 ATP = carbamoyl phosphate + 2 ADP + phosphate + 2 H(+). Its pathway is amino-acid biosynthesis; L-arginine biosynthesis; carbamoyl phosphate from bicarbonate: step 1/1. The protein operates within pyrimidine metabolism; UMP biosynthesis via de novo pathway; (S)-dihydroorotate from bicarbonate: step 1/3. Functionally, large subunit of the glutamine-dependent carbamoyl phosphate synthetase (CPSase). CPSase catalyzes the formation of carbamoyl phosphate from the ammonia moiety of glutamine, carbonate, and phosphate donated by ATP, constituting the first step of 2 biosynthetic pathways, one leading to arginine and/or urea and the other to pyrimidine nucleotides. The large subunit (synthetase) binds the substrates ammonia (free or transferred from glutamine from the small subunit), hydrogencarbonate and ATP and carries out an ATP-coupled ligase reaction, activating hydrogencarbonate by forming carboxy phosphate which reacts with ammonia to form carbamoyl phosphate. The sequence is that of Carbamoyl phosphate synthase large chain from Leuconostoc citreum (strain KM20).